The sequence spans 366 residues: Carbamoyl phosphate synthase small chain (366 aa).

The interval 1–171 (MLERRYLVLE…KTPYVSTGSD (171 aa)) is CPSase. The L-glutamine site is built by serine 47, glycine 221, and glycine 223. The Glutamine amidotransferase type-1 domain maps to 173 to 360 (SVVLLDFGKK…MTMMKEFKEK (188 aa)). Cysteine 248 serves as the catalytic Nucleophile. L-glutamine is bound by residues leucine 249, glutamine 252, asparagine 290, glycine 292, and tyrosine 293. Active-site residues include histidine 333 and glutamate 335.

It belongs to the CarA family. In terms of assembly, composed of two chains; the small (or glutamine) chain promotes the hydrolysis of glutamine to ammonia, which is used by the large (or ammonia) chain to synthesize carbamoyl phosphate. Tetramer of heterodimers (alpha,beta)4.

The catalysed reaction is hydrogencarbonate + L-glutamine + 2 ATP + H2O = carbamoyl phosphate + L-glutamate + 2 ADP + phosphate + 2 H(+). The enzyme catalyses L-glutamine + H2O = L-glutamate + NH4(+). Its pathway is amino-acid biosynthesis; L-arginine biosynthesis; carbamoyl phosphate from bicarbonate: step 1/1. The protein operates within pyrimidine metabolism; UMP biosynthesis via de novo pathway; (S)-dihydroorotate from bicarbonate: step 1/3. Small subunit of the glutamine-dependent carbamoyl phosphate synthetase (CPSase). CPSase catalyzes the formation of carbamoyl phosphate from the ammonia moiety of glutamine, carbonate, and phosphate donated by ATP, constituting the first step of 2 biosynthetic pathways, one leading to arginine and/or urea and the other to pyrimidine nucleotides. The small subunit (glutamine amidotransferase) binds and cleaves glutamine to supply the large subunit with the substrate ammonia. The chain is Carbamoyl phosphate synthase small chain from Staphylococcus haemolyticus (strain JCSC1435).